The chain runs to 32 residues: Photosystem II reaction center protein T (32 aa).

The helical transmembrane segment at 3-23 (ALVYTFLLIGTLIVIFFAVFF) threads the bilayer.

It belongs to the PsbT family. In terms of assembly, PSII is composed of 1 copy each of membrane proteins PsbA, PsbB, PsbC, PsbD, PsbE, PsbF, PsbH, PsbI, PsbJ, PsbK, PsbL, PsbM, PsbT, PsbX, PsbY, PsbZ, Psb30/Ycf12, at least 3 peripheral proteins of the oxygen-evolving complex and a large number of cofactors. It forms dimeric complexes.

The protein localises to the plastid. It is found in the chloroplast thylakoid membrane. In terms of biological role, found at the monomer-monomer interface of the photosystem II (PS II) dimer, plays a role in assembly and dimerization of PSII. PSII is a light-driven water plastoquinone oxidoreductase, using light energy to abstract electrons from H(2)O, generating a proton gradient subsequently used for ATP formation. The sequence is that of Photosystem II reaction center protein T from Phaeodactylum tricornutum (strain CCAP 1055/1).